A 169-amino-acid chain; its full sequence is 16S rRNA aminocarboxypropyltransferase (169 aa).

Residues T15, V65, L88, and T107 each contribute to the S-adenosyl-L-methionine site.

Belongs to the TDD superfamily. TSR3 family.

Its subcellular location is the cytoplasm. It carries out the reaction an N(1)-methylpseudouridine in rRNA + S-adenosyl-L-methionine = N(1)-methyl-N(3)-[(3S)-3-amino-3-carboxypropyl]pseudouridine in rRNA + S-methyl-5'-thioadenosine + H(+). Functionally, aminocarboxypropyltransferase that catalyzes the aminocarboxypropyl transfer on pseudouridine corresponding to position 914 in M.jannaschii 16S rRNA. It constitutes the last step in biosynthesis of the hypermodified N1-methyl-N3-(3-amino-3-carboxypropyl) pseudouridine (m1acp3-Psi). This Methanopyrus kandleri (strain AV19 / DSM 6324 / JCM 9639 / NBRC 100938) protein is 16S rRNA aminocarboxypropyltransferase.